A 663-amino-acid chain; its full sequence is DNA ligase (663 aa).

NAD(+) contacts are provided by residues 31–35 (DFEYD), 80–81 (SL), and E110. The active-site N6-AMP-lysine intermediate is the K112. NAD(+) is bound by residues R133, E168, K284, and K308. Residues C402, C405, C420, and C425 each contribute to the Zn(2+) site. A BRCT domain is found at 586–663 (IKDNRFEGKT…DEDKFRKMIE (78 aa)).

This sequence belongs to the NAD-dependent DNA ligase family. LigA subfamily. It depends on Mg(2+) as a cofactor. The cofactor is Mn(2+).

The enzyme catalyses NAD(+) + (deoxyribonucleotide)n-3'-hydroxyl + 5'-phospho-(deoxyribonucleotide)m = (deoxyribonucleotide)n+m + AMP + beta-nicotinamide D-nucleotide.. Its function is as follows. DNA ligase that catalyzes the formation of phosphodiester linkages between 5'-phosphoryl and 3'-hydroxyl groups in double-stranded DNA using NAD as a coenzyme and as the energy source for the reaction. It is essential for DNA replication and repair of damaged DNA. This chain is DNA ligase, found in Acetivibrio thermocellus (strain ATCC 27405 / DSM 1237 / JCM 9322 / NBRC 103400 / NCIMB 10682 / NRRL B-4536 / VPI 7372) (Clostridium thermocellum).